A 512-amino-acid polypeptide reads, in one-letter code: Cytochrome P450 monooxygenase adrA (512 aa).

The chain crosses the membrane as a helical span at residues 12-32 (FEPVSLVGLVLLSGLFLLLTA). 3 N-linked (GlcNAc...) asparagine glycosylation sites follow: N86, N149, and N210. C453 serves as a coordination point for heme.

This sequence belongs to the cytochrome P450 family. The cofactor is heme.

It localises to the membrane. Its pathway is secondary metabolite biosynthesis; terpenoid biosynthesis. Cytochrome P450 monooxygenase; part of the gene cluster that mediates the biosynthesis of andrastins, meroterpenoid compounds that exhibit inhibitory activity against ras farnesyltransferase, suggesting that they could be promising leads for antitumor agents. The first step of the pathway is the synthesis of 3,5-dimethylorsellinic acid (DMOA) by the polyketide synthase adrD via condensation of one acetyl-CoA starter unit with 3 malonyl-CoA units and 2 methylations. DMAO is then converted to farnesyl-DMAO by the prenyltransferase adrG. The methyltransferase adrK catalyzes the methylation of the carboxyl group of farnesyl-DMAO to farnesyl-DMAO methyl ester which is further converted to epoxyfarnesyl-DMAO methyl ester by the FAD-dependent monooxygenase adrH. The terpene cyclase adrI then catalyzes the carbon skeletal rearrangement to generate the andrastin E, the first compound in the pathway having the andrastin scaffold, with the tetracyclic ring system. The post-cyclization tailoring enzymes adrF, adrE, adrJ, and adrA, are involved in the conversion of andrastin E into andrastin A. The short chain dehydrogenase adrF is responsible for the oxidation of the C-3 a hydroxyl group of andrastin E to yield the corresponding ketone, andrastin D. The ketoreductase adrE stereoselectively reduces the carbonyl moiety to reverse the stereochemistry of the C-3 position to yield andrastin F. The acetyltransferase adrJ is the acetyltransferase that attaches the acetyl group to the C-3 hydroxyl group of andrastin F to yield andrastin C. Finally, the cytochrome P450 monooxygenase adrA catalyzes two sequential oxidation reactions of the C-23 methyl group, to generate the corresponding alcohol andrastin B, and aldehyde andrastin A. This chain is Cytochrome P450 monooxygenase adrA, found in Penicillium rubens (strain ATCC 28089 / DSM 1075 / NRRL 1951 / Wisconsin 54-1255) (Penicillium chrysogenum).